The sequence spans 267 residues: Alkaline ceramidase 3 (267 aa).

At 1–33 (MAPAVDRKGYWGPTTSTLDWCEENYVVTLFVAE) the chain is on the cytoplasmic side. Ca(2+) is bound by residues Asp-19, Trp-20, Glu-22, Asn-24, and Glu-33. A helical membrane pass occupies residues 34 to 55 (FWNTVSNLIMIIPPIFGAIQGI). At 56–61 (RDRLEK) the chain is on the lumenal side. A helical transmembrane segment spans residues 62–82 (RYIAAYLALTVVGMGSWCFHM). His-81 contributes to the Zn(2+) binding site. At 83 to 87 (TLKYE) the chain is on the cytoplasmic side. Residues 88 to 108 (MQLLDELPMIYSCCIFVYCMF) form a helical membrane-spanning segment. Residues 109 to 118 (ECFKTKSSIN) lie on the Lumenal side of the membrane. Residues 119–139 (YHLLFTLFLYSLTVTTIYLKV) form a helical membrane-spanning segment. Over 140-141 (KE) the chain is Cytoplasmic. Residues 142–162 (PIFHQVMYGMLVFTLVLRSIY) form a helical membrane-spanning segment. The Lumenal portion of the chain corresponds to 163–173 (IVTWVYPWLRG). A helical transmembrane segment spans residues 174 to 194 (LGYTSLTVFLLGFLLWNIDNI). Residues 195 to 215 (FCDSLRNFRKRVPPVLGVTTQ) lie on the Cytoplasmic side of the membrane. Residues 216–236 (FHAWWHILTGLGSYLHILFSL) form a helical membrane-spanning segment. Positions 217 and 221 each coordinate Zn(2+). The Lumenal portion of the chain corresponds to 237-267 (YTRTLYLRYRPKVKFLFGIWPAVMFEPQRKH).

It belongs to the alkaline ceramidase family. The cofactor is Zn(2+). As to expression, up-regulated with age in cerebeLlum and cerebrum.

It is found in the endoplasmic reticulum membrane. Its subcellular location is the golgi apparatus membrane. It carries out the reaction an N-acyl-(4R)-4-hydroxysphinganine + H2O = (4R)-hydroxysphinganine + a fatty acid. The catalysed reaction is N-(5Z,8Z,11Z,14Z-eicosatetraenoyl)-sphing-4-enine + H2O = sphing-4-enine + (5Z,8Z,11Z,14Z)-eicosatetraenoate. It catalyses the reaction N-(5Z,8Z,11Z,14Z-eicosatetraenoyl)-sphinganine + H2O = sphinganine + (5Z,8Z,11Z,14Z)-eicosatetraenoate. The enzyme catalyses N-(5Z,8Z,11Z,14Z-eicosatetraenoyl)-(4R)-hydroxysphinganine + H2O = (4R)-hydroxysphinganine + (5Z,8Z,11Z,14Z)-eicosatetraenoate. It carries out the reaction N-(11Z-eicosenoyl)-sphing-4-enine + H2O = (11Z)-eicosenoate + sphing-4-enine. The catalysed reaction is N-(11Z-eicosenoyl)-sphinganine + H2O = (11Z)-eicosenoate + sphinganine. It catalyses the reaction N-(11Z-eicosenoyl)-(4R)-hydroxysphinganine + H2O = (11Z)-eicosenoate + (4R)-hydroxysphinganine. The enzyme catalyses N-(9Z-octadecenoyl)-sphing-4-enine + H2O = sphing-4-enine + (9Z)-octadecenoate. It carries out the reaction N-(9Z-octadecenoyl)-sphinganine + H2O = sphinganine + (9Z)-octadecenoate. The catalysed reaction is N-(9Z-octadecenoyl)-(4R)-hydroxysphinganine + H2O = (4R)-hydroxysphinganine + (9Z)-octadecenoate. It catalyses the reaction an N-acylsphing-4-enine + H2O = sphing-4-enine + a fatty acid. The enzyme catalyses an N-acylsphinganine + H2O = sphinganine + a fatty acid. It functions in the pathway lipid metabolism; sphingolipid metabolism. Activated by Ca(2+) and inhibited by Zn(2+). In terms of biological role, endoplasmic reticulum and Golgi ceramidase that catalyzes the hydrolysis of unsaturated long-chain C18:1-, C20:1- and C20:4-ceramides, dihydroceramides and phytoceramides into sphingoid bases like sphingosine and free fatty acids at alkaline pH. Ceramides, sphingosine, and its phosphorylated form sphingosine-1-phosphate are bioactive lipids that mediate cellular signaling pathways regulating several biological processes including cell proliferation, apoptosis and differentiation. Controls the generation of sphingosine in erythrocytes, and thereby sphingosine-1-phosphate in plasma. Through the regulation of ceramides and sphingosine-1-phosphate homeostasis in the brain may play a role in neurons survival and function. By regulating the levels of pro-inflammatory ceramides in immune cells and tissues, may modulate the inflammatory response. The polypeptide is Alkaline ceramidase 3 (Acer3) (Mus musculus (Mouse)).